A 472-amino-acid chain; its full sequence is tRNA-2-methylthio-N(6)-dimethylallyladenosine synthase (472 aa).

The segment at 1–24 (MTGTPDVFPPATPGGTPLVALPAG) is disordered. The 118-residue stretch at 33–150 (GKLYIKTHGC…LPELIRARRE (118 aa)) folds into the MTTase N-terminal domain. [4Fe-4S] cluster-binding residues include Cys42, Cys79, Cys113, Cys187, Cys191, and Cys194. Residues 173–407 (RADGASAFVS…RINAHAAGIS (235 aa)) form the Radical SAM core domain. Residues 408-471 (EKMVGTVQTV…TNSLRARVVA (64 aa)) enclose the TRAM domain.

This sequence belongs to the methylthiotransferase family. MiaB subfamily. Monomer. [4Fe-4S] cluster serves as cofactor.

The protein localises to the cytoplasm. The catalysed reaction is N(6)-dimethylallyladenosine(37) in tRNA + (sulfur carrier)-SH + AH2 + 2 S-adenosyl-L-methionine = 2-methylsulfanyl-N(6)-dimethylallyladenosine(37) in tRNA + (sulfur carrier)-H + 5'-deoxyadenosine + L-methionine + A + S-adenosyl-L-homocysteine + 2 H(+). In terms of biological role, catalyzes the methylthiolation of N6-(dimethylallyl)adenosine (i(6)A), leading to the formation of 2-methylthio-N6-(dimethylallyl)adenosine (ms(2)i(6)A) at position 37 in tRNAs that read codons beginning with uridine. The protein is tRNA-2-methylthio-N(6)-dimethylallyladenosine synthase of Stenotrophomonas maltophilia (strain R551-3).